We begin with the raw amino-acid sequence, 496 residues long: Cytochrome P450 71D95 (496 aa).

A helical; Signal-anchor membrane pass occupies residues 2–22 (ELQISSAIIILVATFVASLLI). Residue Cys436 participates in heme binding.

This sequence belongs to the cytochrome P450 family. It depends on heme as a cofactor.

It localises to the endoplasmic reticulum membrane. It catalyses the reaction (4S)-limonene + reduced [NADPH--hemoprotein reductase] + O2 = (1S,6R)-isopiperitenol + oxidized [NADPH--hemoprotein reductase] + H2O + H(+). In terms of biological role, hydroxylates both (+)- and (-)-limonene to (+) and (-)-trans-isopiperitenol. The protein is Cytochrome P450 71D95 (CYP71D95) of Mentha spicata (Spearmint).